The following is a 443-amino-acid chain: MESLASLYKNHIATLQERTRDALARFKLDALLIHSGELFNVFLDDHPYPFKVNPQFKAWVPVTQVPNCWLLVDGVNKPKLWFYLPVDYWHNVEPLPNSFWTEDVEVIALPKADGIGSLLPAARGNIGYIGPVPERALQLGIEASNINPKGVIDYLHYYRSFKTEYELACMREAQKMAVNGHRAAEEAFRSGMSEFDINIAYLTATGHRDTDVPYSNIVALNEHAAVLHYTKLDHQAPEEMRSFLLDAGAEYNGYAADLTRTWSAKSDNDYAQLVKDVNDEQLALIATMKAGVSYVDYHIQFHQRIAKLLRKHQIITDMSEEAMVENDLTGPFMPHGIGHPLGLQVHDVAGFMQDDSGTHLAAPAKYPYLRCTRILQPGMVLTIEPGIYFIESLLAPWREGQFSKHFNWQKIEALKPFGGIRIEDNVVIHENSVENMTRDLKLA.

The Mn(2+) site is built by aspartate 246, aspartate 257, histidine 339, glutamate 384, and glutamate 423.

It belongs to the peptidase M24B family. Bacterial-type prolidase subfamily. The cofactor is Mn(2+).

The catalysed reaction is Xaa-L-Pro dipeptide + H2O = an L-alpha-amino acid + L-proline. Functionally, splits dipeptides with a prolyl residue in the C-terminal position. The polypeptide is Xaa-Pro dipeptidase (Escherichia coli O7:K1 (strain IAI39 / ExPEC)).